The chain runs to 250 residues: Probable transcriptional regulatory protein Mkms_2298 (250 aa).

This sequence belongs to the TACO1 family.

Its subcellular location is the cytoplasm. The chain is Probable transcriptional regulatory protein Mkms_2298 from Mycobacterium sp. (strain KMS).